The primary structure comprises 369 residues: Hsc70-interacting protein (369 aa).

The tract at residues 38-97 (MGGKVPPATQKAKSEENTKEEKPDSKKVEEDLKADEPSSEESDLEIDKEGVIEPDTDAPQ) is disordered. A compositionally biased stretch (basic and acidic residues) spans 49–73 (AKSEENTKEEKPDSKKVEEDLKADE). 3 TPR repeats span residues 114–147 (ANDKKVAAIEALNDGELQKAIDLFTDAIKLNPRL), 148–181 (AILYAKRASVFVKLQKPNAAIRDCDRAIEINPDS), and 182–215 (AQPYKWRGKAHRLLGHWEEAAHDLALACKLDYDE). Residues 256–272 (KAREEHERAQREEEARR) show a composition bias toward basic and acidic residues. Residues 256-300 (KAREEHERAQREEEARRQSGAQYGSFPGGFPGGMPGNFPGGMPGM) are disordered. The segment covering 281 to 300 (FPGGFPGGMPGNFPGGMPGM) has biased composition (gly residues). Residues 319-358 (DPEVLAAMQDPEVMVAFQDVAQNPANMSKYQSNPKVMNLI) enclose the STI1 domain. Ser-346 carries the post-translational modification Phosphoserine; by GRK5. N6-acetyllysine is present on residues Lys-353 and Lys-360.

This sequence belongs to the FAM10 family. Homotetramer. Interacts with HSC70 as well as DNAJ homologs and HSP90. Interacts (via the C-terminus 303- 319 AA) with GRK5.

The protein localises to the cytoplasm. Functionally, one HIP oligomer binds the ATPase domains of at least two HSC70 molecules dependent on activation of the HSC70 ATPase by HSP40. Stabilizes the ADP state of HSC70 that has a high affinity for substrate protein. Through its own chaperone activity, it may contribute to the interaction of HSC70 with various target proteins. The polypeptide is Hsc70-interacting protein (ST13) (Homo sapiens (Human)).